Here is a 116-residue protein sequence, read N- to C-terminus: Putative pterin-4-alpha-carbinolamine dehydratase (116 aa).

Belongs to the pterin-4-alpha-carbinolamine dehydratase family.

The catalysed reaction is (4aS,6R)-4a-hydroxy-L-erythro-5,6,7,8-tetrahydrobiopterin = (6R)-L-erythro-6,7-dihydrobiopterin + H2O. The chain is Putative pterin-4-alpha-carbinolamine dehydratase from Stenotrophomonas maltophilia (strain K279a).